A 704-amino-acid polypeptide reads, in one-letter code: Ankyrin repeat and LEM domain-containing protein 1 homolog (704 aa).

Positions 1–29 (MPPNGAITTTPRSRMPPTTPSSGKSRPKK) are disordered. Low complexity predominate over residues 8-22 (TTTPRSRMPPTTPSS). 2 ANK repeats span residues 28–59 (KKET…NVNA) and 63–93 (DGAT…PMSA). 3 disordered regions span residues 247-293 (NEDV…SQET), 314-358 (NAGL…ANTT), and 381-421 (SKSA…TTVD). Basic residues predominate over residues 276–288 (RKQRTPVNHHKRS). 2 stretches are compositionally biased toward low complexity: residues 329–346 (EPAI…TPKT) and 384–405 (AKSS…SFSS). The LEM domain maps to 425–470 (IRKIRRLREGELKSELKKFGISPAGPLDARTRRLYEKKLLIERRKI). The 111-residue stretch at 525-635 (YNAFCYLIMD…AVKLKNLRNK (111 aa)) folds into the GIY-YIG domain.

Post-translationally, phosphorylated. Phosphorylated during telophase when localized at the midbody.

The protein resides in the cytoplasm. It is found in the nucleus. The protein localises to the chromosome. It localises to the midbody. Its subcellular location is the cytoskeleton. The protein resides in the spindle. Inhibited by EDTA. In terms of biological role, endonuclease which, in association with baf-1, plays an essential role during embryogenesis in the DNA repair response following DNA damage probably by ensuring proper chromosome segregation. Also required during postembryonic cell divisions after DNA damage caused by ionizing radiation to ensure normal cell proliferation. Resolves chromatin bridges in late mitosis that result from incomplete DNA replication, defective chromosome condensation or unresolved recombination intermediates. Together with brc-1, contributes to genome integrity by resolving mitotic chromatin bridges that result from incomplete processing of DNA breaks. In parallel to the slx-1/mus-81 pathway, acts in processing early recombination intermediates in meiotic prophase I to prevent illegitimate recombination. Also involved in processing remaining, erroneous recombination intermediates that persist into the second meiotic division. The protein is Ankyrin repeat and LEM domain-containing protein 1 homolog of Caenorhabditis elegans.